A 282-amino-acid chain; its full sequence is uncharacterized protein (282 aa).

Y50 serves as the catalytic Proton donor. H115 is a substrate binding site.

Belongs to the aldo/keto reductase family.

This is an uncharacterized protein from Saccharomyces cerevisiae (strain ATCC 204508 / S288c) (Baker's yeast).